Consider the following 273-residue polypeptide: 2,3,4,5-tetrahydropyridine-2,6-dicarboxylate N-succinyltransferase (273 aa).

This sequence belongs to the transferase hexapeptide repeat family.

The protein localises to the cytoplasm. It catalyses the reaction (S)-2,3,4,5-tetrahydrodipicolinate + succinyl-CoA + H2O = (S)-2-succinylamino-6-oxoheptanedioate + CoA. Its pathway is amino-acid biosynthesis; L-lysine biosynthesis via DAP pathway; LL-2,6-diaminopimelate from (S)-tetrahydrodipicolinate (succinylase route): step 1/3. This chain is 2,3,4,5-tetrahydropyridine-2,6-dicarboxylate N-succinyltransferase, found in Bordetella petrii (strain ATCC BAA-461 / DSM 12804 / CCUG 43448).